A 496-amino-acid chain; its full sequence is UDP-N-acetylmuramoyl-L-alanyl-D-glutamate--2,6-diaminopimelate ligase (496 aa).

A UDP-N-acetyl-alpha-D-muramoyl-L-alanyl-D-glutamate-binding site is contributed by S32. ATP is bound at residue 116–122 (GTNGKTT). UDP-N-acetyl-alpha-D-muramoyl-L-alanyl-D-glutamate is bound by residues 158 to 159 (TT), S185, Q191, and R193. K225 bears the N6-carboxylysine mark. Meso-2,6-diaminopimelate-binding positions include R389, 413–416 (DNPR), G464, and E468. Residues 413–416 (DNPR) carry the Meso-diaminopimelate recognition motif motif.

It belongs to the MurCDEF family. MurE subfamily. The cofactor is Mg(2+). Carboxylation is probably crucial for Mg(2+) binding and, consequently, for the gamma-phosphate positioning of ATP.

The protein resides in the cytoplasm. The enzyme catalyses UDP-N-acetyl-alpha-D-muramoyl-L-alanyl-D-glutamate + meso-2,6-diaminopimelate + ATP = UDP-N-acetyl-alpha-D-muramoyl-L-alanyl-gamma-D-glutamyl-meso-2,6-diaminopimelate + ADP + phosphate + H(+). Its pathway is cell wall biogenesis; peptidoglycan biosynthesis. Catalyzes the addition of meso-diaminopimelic acid to the nucleotide precursor UDP-N-acetylmuramoyl-L-alanyl-D-glutamate (UMAG) in the biosynthesis of bacterial cell-wall peptidoglycan. In Trichormus variabilis (strain ATCC 29413 / PCC 7937) (Anabaena variabilis), this protein is UDP-N-acetylmuramoyl-L-alanyl-D-glutamate--2,6-diaminopimelate ligase.